Here is a 595-residue protein sequence, read N- to C-terminus: Sulfite reductase [NADPH] flavoprotein alpha-component (595 aa).

In terms of domain architecture, Flavodoxin-like spans 59–197 (ITVLSASQTG…KADIWRREIV (139 aa)). FMN-binding positions include 65 to 70 (SQTGNA), 112 to 115 (STQG), and 148 to 157 (LGDSSYTYFA). Residues 230–444 (EEPFTAHLVV…IEHNDNFRLP (215 aa)) enclose the FAD-binding FR-type domain. Residues Thr318, Phe352, 382–385 (RLYS), 400–402 (TVS), Tyr406, and 415–418 (GGAS) each bind FAD. Residues 515-516 (SQ), 521-525 (KIYVQ), and Asp557 contribute to the NADP(+) site. Tyr595 lines the FAD pocket.

It belongs to the NADPH-dependent sulphite reductase flavoprotein subunit CysJ family. The protein in the N-terminal section; belongs to the flavodoxin family. In the C-terminal section; belongs to the flavoprotein pyridine nucleotide cytochrome reductase family. Alpha(8)-beta(8). The alpha component is a flavoprotein, the beta component is a hemoprotein. FAD serves as cofactor. FMN is required as a cofactor.

It carries out the reaction hydrogen sulfide + 3 NADP(+) + 3 H2O = sulfite + 3 NADPH + 4 H(+). It functions in the pathway sulfur metabolism; hydrogen sulfide biosynthesis; hydrogen sulfide from sulfite (NADPH route): step 1/1. Its function is as follows. Component of the sulfite reductase complex that catalyzes the 6-electron reduction of sulfite to sulfide. This is one of several activities required for the biosynthesis of L-cysteine from sulfate. The flavoprotein component catalyzes the electron flow from NADPH -&gt; FAD -&gt; FMN to the hemoprotein component. The protein is Sulfite reductase [NADPH] flavoprotein alpha-component of Baumannia cicadellinicola subsp. Homalodisca coagulata.